The sequence spans 156 residues: ATP synthase subunit b (156 aa).

The chain crosses the membrane as a helical span at residues 7-27; it reads LIGELIAFTVFVLFCMKFVWP.

It belongs to the ATPase B chain family. F-type ATPases have 2 components, F(1) - the catalytic core - and F(0) - the membrane proton channel. F(1) has five subunits: alpha(3), beta(3), gamma(1), delta(1), epsilon(1). F(0) has three main subunits: a(1), b(2) and c(10-14). The alpha and beta chains form an alternating ring which encloses part of the gamma chain. F(1) is attached to F(0) by a central stalk formed by the gamma and epsilon chains, while a peripheral stalk is formed by the delta and b chains.

Its subcellular location is the cell inner membrane. Functionally, f(1)F(0) ATP synthase produces ATP from ADP in the presence of a proton or sodium gradient. F-type ATPases consist of two structural domains, F(1) containing the extramembraneous catalytic core and F(0) containing the membrane proton channel, linked together by a central stalk and a peripheral stalk. During catalysis, ATP synthesis in the catalytic domain of F(1) is coupled via a rotary mechanism of the central stalk subunits to proton translocation. In terms of biological role, component of the F(0) channel, it forms part of the peripheral stalk, linking F(1) to F(0). The protein is ATP synthase subunit b of Pseudoalteromonas translucida (strain TAC 125).